A 257-amino-acid chain; its full sequence is Fimbrial assembly protein, serogroup I (257 aa).

The sequence is that of Fimbrial assembly protein, serogroup I (fimB) from Dichelobacter nodosus (Bacteroides nodosus).